Consider the following 181-residue polypeptide: ATP synthase subunit delta (181 aa).

The protein belongs to the ATPase delta chain family. F-type ATPases have 2 components, F(1) - the catalytic core - and F(0) - the membrane proton channel. F(1) has five subunits: alpha(3), beta(3), gamma(1), delta(1), epsilon(1). F(0) has three main subunits: a(1), b(2) and c(10-14). The alpha and beta chains form an alternating ring which encloses part of the gamma chain. F(1) is attached to F(0) by a central stalk formed by the gamma and epsilon chains, while a peripheral stalk is formed by the delta and b chains.

The protein localises to the cell inner membrane. F(1)F(0) ATP synthase produces ATP from ADP in the presence of a proton or sodium gradient. F-type ATPases consist of two structural domains, F(1) containing the extramembraneous catalytic core and F(0) containing the membrane proton channel, linked together by a central stalk and a peripheral stalk. During catalysis, ATP synthesis in the catalytic domain of F(1) is coupled via a rotary mechanism of the central stalk subunits to proton translocation. In terms of biological role, this protein is part of the stalk that links CF(0) to CF(1). It either transmits conformational changes from CF(0) to CF(1) or is implicated in proton conduction. This is ATP synthase subunit delta from Mannheimia succiniciproducens (strain KCTC 0769BP / MBEL55E).